A 489-amino-acid chain; its full sequence is Virion host shutoff protein (489 aa).

Disordered stretches follow at residues 110–135, 142–161, 285–316, and 333–363; these read EEASDVDASPPPSPITDSRPSSAFSN, SLASGTRGTAGSGAALPSAA, RSQTRRAIRREHTSSRSTETRPPLPPAAGGTE, and YEDDEDLPLDPRDVTGGHPGPRSSSSEILTP. Positions 124–134 are enriched in polar residues; the sequence is ITDSRPSSAFS.

Belongs to the herpesviridae VHS protein family. As to quaternary structure, interacts with human EIF4H, EIF4A1 and EIF4A2; interaction with eIF4AI and EIF4A2 presumably allows Vhs protein to associate with the eIF4F cap-binding complex.

Its subcellular location is the virion. Minor structural protein that acts as an endoribonuclease during lytic infection. Degrades host mRNAs in the cytoplasm by cutting them at preferred sites, including some in regions of translation initiation. Together with inhibition of host splicing by ICP27, contributes to an overall decrease in host protein synthesis. Also, after the onset of viral transcription, accelerates the turnover of viral mRNA, thereby facilitating the sequential expression of different classes of viral genes. Binds translation initiation factors eIF4H, eIF4AI, and eIF4AII, thereby may interact directly with the translation initiation complex and thus digest specifically mRNAs. Also impedes antigen presentation by major histocompatibility complex class I and class II molecules, inhibits secretion of cytokines that would otherwise recruit lymphocytes and neutrophils cells to the site of infection and blocks the activation of dendritic cells. Impedes the alpha/beta interferon-mediated response to infection by evading the cGAS/ STING-mediated DNA-sensing pathway and degrading CGAS via its RNase activity. This chain is Virion host shutoff protein (UL41), found in Human herpesvirus 1 (strain KOS) (HHV-1).